Here is a 114-residue protein sequence, read N- to C-terminus: SCP2 domain-containing protein YusD (114 aa).

Positions 21–101 (NASTLLITFQ…RALLKLEAIL (81 aa)) constitute an SCP2 domain.

This chain is SCP2 domain-containing protein YusD (yusD), found in Bacillus subtilis (strain 168).